The following is a 244-amino-acid chain: DnaJ homolog subfamily C member 4 (244 aa).

Residues 37–102 (NYYELLGVHP…ESRRNYDHQL (66 aa)) enclose the J domain. The disordered stretch occupies residues 96–127 (RNYDHQLHSASPPKSSGSTAEPKYTQQTHSSW). Residues 103–127 (HSASPPKSSGSTAEPKYTQQTHSSW) are compositionally biased toward polar residues. The chain crosses the membrane as a helical span at residues 159 to 178 (VLGYCLLLMVAGMGLHYVAF). The tract at residues 208–244 (RANRARIQQERQQRQQPRAEPSLPPESSRIMPQDTSP) is disordered.

It is found in the membrane. In Mus musculus (Mouse), this protein is DnaJ homolog subfamily C member 4 (Dnajc4).